The chain runs to 174 residues: Photosystem I assembly protein Ycf4 (174 aa).

2 helical membrane passes run 11–31 and 56–76; these read LSNI…FLNG and IILM…CLTI.

The protein belongs to the Ycf4 family.

The protein resides in the plastid. The protein localises to the chloroplast thylakoid membrane. Seems to be required for the assembly of the photosystem I complex. This is Photosystem I assembly protein Ycf4 from Emiliania huxleyi (Coccolithophore).